Here is a 418-residue protein sequence, read N- to C-terminus: 3-isopropylmalate dehydratase large subunit (418 aa).

Residues C297, C357, and C360 each contribute to the [4Fe-4S] cluster site.

Belongs to the aconitase/IPM isomerase family. LeuC type 2 subfamily. Heterodimer of LeuC and LeuD. [4Fe-4S] cluster is required as a cofactor.

It catalyses the reaction (2R,3S)-3-isopropylmalate = (2S)-2-isopropylmalate. The protein operates within amino-acid biosynthesis; L-leucine biosynthesis; L-leucine from 3-methyl-2-oxobutanoate: step 2/4. Catalyzes the isomerization between 2-isopropylmalate and 3-isopropylmalate, via the formation of 2-isopropylmaleate. The chain is 3-isopropylmalate dehydratase large subunit from Elusimicrobium minutum (strain Pei191).